Reading from the N-terminus, the 367-residue chain is MIASLHRPTLAKVDLSAISENIEQVVSHIPKQVQTFAVVKANAYGHGAVEVAKHVSKQVDGFCVSNLDEALELRQAGIEQPILILGVVLPDGVPLAIQENISLTVASLEWLALAQKQGLDLIGLTCHIKVDSGMGRIGVRNLKDADNLIAGLKALGADVEGIFTHFATADEADDSKFKRQLSFFTDLVDNLTDRPRLVHASNSATSIWHAATVFNTVRLGVVIYGLNPSGSVLELPYNIQPALSLETALIHVKTLPAGQDVGYGATYTTTAEEVIGTLPIGYADGWTRDLQGFHVIVDGQLCPIVGRVSMDQITVRLPKVYPLGTPVTLMGENGGASITATEVAEKRGTINYEVLCLLSDRVPRSYD.

The Proton acceptor; specific for D-alanine role is filled by K40. At K40 the chain carries N6-(pyridoxal phosphate)lysine. R136 is a binding site for substrate. Catalysis depends on Y263, which acts as the Proton acceptor; specific for L-alanine. M310 lines the substrate pocket.

This sequence belongs to the alanine racemase family. It depends on pyridoxal 5'-phosphate as a cofactor.

The enzyme catalyses L-alanine = D-alanine. The protein operates within amino-acid biosynthesis; D-alanine biosynthesis; D-alanine from L-alanine: step 1/1. Catalyzes the interconversion of L-alanine and D-alanine. May also act on other amino acids. The polypeptide is Alanine racemase (alr) (Streptococcus thermophilus (strain ATCC BAA-491 / LMD-9)).